We begin with the raw amino-acid sequence, 243 residues long: DNA repair protein RecO (243 aa).

It belongs to the RecO family.

In terms of biological role, involved in DNA repair and RecF pathway recombination. This Hyphomonas neptunium (strain ATCC 15444) protein is DNA repair protein RecO.